A 310-amino-acid chain; its full sequence is Protoheme IX farnesyltransferase (310 aa).

The next 9 helical transmembrane spans lie at 26–45 (VMSL…PVTV), 49–71 (IALT…NMWW), 95–115 (GEAL…LGLA), 118–138 (LFAA…YSMW), 147–167 (IVIG…VATG), 174–194 (LFMF…LALF), 220–240 (VLVY…TGIG), 243–263 (LYLA…VRIW), and 289–309 (LFLH…GLGG).

Belongs to the UbiA prenyltransferase family. Protoheme IX farnesyltransferase subfamily. In terms of assembly, interacts with CtaA.

The protein localises to the cell inner membrane. It catalyses the reaction heme b + (2E,6E)-farnesyl diphosphate + H2O = Fe(II)-heme o + diphosphate. Its pathway is porphyrin-containing compound metabolism; heme O biosynthesis; heme O from protoheme: step 1/1. Its function is as follows. Converts heme B (protoheme IX) to heme O by substitution of the vinyl group on carbon 2 of heme B porphyrin ring with a hydroxyethyl farnesyl side group. The protein is Protoheme IX farnesyltransferase of Cereibacter sphaeroides (strain ATCC 17029 / ATH 2.4.9) (Rhodobacter sphaeroides).